Consider the following 508-residue polypeptide: Phenylalanine--tRNA ligase alpha subunit (508 aa).

An N-acetylalanine modification is found at Ala-2. Phosphothreonine is present on Thr-190. A phosphoserine mark is found at Ser-193 and Ser-301. N6-acetyllysine is present on Lys-311. Residues Thr-329, 372–374 (QIE), and Tyr-412 contribute to the L-phenylalanine site. Position 414 (Glu-414) interacts with Mg(2+). Phe-438 serves as a coordination point for L-phenylalanine.

The protein belongs to the class-II aminoacyl-tRNA synthetase family. Phe-tRNA synthetase alpha subunit type 2 subfamily. Heterotetramer; dimer of two heterodimers formed by FARSA and FARSB. The cofactor is Mg(2+).

It is found in the cytoplasm. The enzyme catalyses tRNA(Phe) + L-phenylalanine + ATP = L-phenylalanyl-tRNA(Phe) + AMP + diphosphate + H(+). The sequence is that of Phenylalanine--tRNA ligase alpha subunit (FARSA) from Pongo abelii (Sumatran orangutan).